The following is a 703-amino-acid chain: UvrABC system protein B (703 aa).

One can recognise a Helicase ATP-binding domain in the interval 33-190 (TRIENGENDV…RRFVAMQYKR (158 aa)). 46–53 (GATGTGKT) is a binding site for ATP. Positions 99-122 (YYDYYQPEAYIPQTDTYIEKDSNI) match the Beta-hairpin motif. The region spanning 436–589 (QIDDLLAEIK…QIAYNQEHGI (154 aa)) is the Helicase C-terminal domain. Residues 659–694 (ADLIRQLSEQMHTAAEQLQFELAARLRDEIRDLKKE) form the UVR domain.

This sequence belongs to the UvrB family. In terms of assembly, forms a heterotetramer with UvrA during the search for lesions. Interacts with UvrC in an incision complex.

The protein localises to the cytoplasm. Functionally, the UvrABC repair system catalyzes the recognition and processing of DNA lesions. A damage recognition complex composed of 2 UvrA and 2 UvrB subunits scans DNA for abnormalities. Upon binding of the UvrA(2)B(2) complex to a putative damaged site, the DNA wraps around one UvrB monomer. DNA wrap is dependent on ATP binding by UvrB and probably causes local melting of the DNA helix, facilitating insertion of UvrB beta-hairpin between the DNA strands. Then UvrB probes one DNA strand for the presence of a lesion. If a lesion is found the UvrA subunits dissociate and the UvrB-DNA preincision complex is formed. This complex is subsequently bound by UvrC and the second UvrB is released. If no lesion is found, the DNA wraps around the other UvrB subunit that will check the other stand for damage. The sequence is that of UvrABC system protein B from Bifidobacterium longum subsp. infantis (strain ATCC 15697 / DSM 20088 / JCM 1222 / NCTC 11817 / S12).